The primary structure comprises 171 residues: Ribosome maturation factor RimM (171 aa).

The PRC barrel domain maps to 96 to 170 (AEGEYYYHEI…LVTIHVMEGL (75 aa)).

It belongs to the RimM family. In terms of assembly, binds ribosomal protein uS19.

It is found in the cytoplasm. Its function is as follows. An accessory protein needed during the final step in the assembly of 30S ribosomal subunit, possibly for assembly of the head region. Essential for efficient processing of 16S rRNA. May be needed both before and after RbfA during the maturation of 16S rRNA. It has affinity for free ribosomal 30S subunits but not for 70S ribosomes. This is Ribosome maturation factor RimM from Bacillus mycoides (strain KBAB4) (Bacillus weihenstephanensis).